Here is a 371-residue protein sequence, read N- to C-terminus: Transposase for insertion sequence element IS421 (371 aa).

Belongs to the transposase 11 family.

Involved in the transposition of the insertion sequence IS421. The polypeptide is Transposase for insertion sequence element IS421 (Escherichia coli).